A 200-amino-acid polypeptide reads, in one-letter code: Holliday junction resolvase RecU (200 aa).

The segment at 1 to 27 is disordered; the sequence is MALKYPSGKEYRGNKPNAARRPAADYA. The Mg(2+) site is built by Thr-84, Asp-86, Glu-99, and Gln-118.

The protein belongs to the RecU family. In terms of assembly, homodimer. Requires Mg(2+) as cofactor.

It is found in the cytoplasm. The enzyme catalyses Endonucleolytic cleavage at a junction such as a reciprocal single-stranded crossover between two homologous DNA duplexes (Holliday junction).. Its function is as follows. Endonuclease that resolves Holliday junction intermediates in genetic recombination. Cleaves mobile four-strand junctions by introducing symmetrical nicks in paired strands. Promotes annealing of linear ssDNA with homologous dsDNA. Required for DNA repair, homologous recombination and chromosome segregation. The protein is Holliday junction resolvase RecU of Geobacillus kaustophilus (strain HTA426).